The primary structure comprises 448 residues: Tubulin alpha-4A chain (448 aa).

Positions 1–4 (MREC) match the MREC motif motif. Gln-11 provides a ligand contact to GTP. The residue at position 40 (Lys-40) is an N6-acetyllysine. Ser-48 bears the Phosphoserine mark. Glu-71 is a binding site for GTP. A Mg(2+)-binding site is contributed by Glu-71. Tyr-83 carries the 3'-nitrotyrosine modification. The GTP site is built by Ser-140, Gly-144, Thr-145, Thr-179, Asn-206, and Asn-228. The active site involves Glu-254. Tyr-432 carries the post-translational modification Phosphotyrosine. Ser-439 is subject to Phosphoserine.

It belongs to the tubulin family. Dimer of alpha and beta chains. A typical microtubule is a hollow water-filled tube with an outer diameter of 25 nm and an inner diameter of 15 nM. Alpha-beta heterodimers associate head-to-tail to form protofilaments running lengthwise along the microtubule wall with the beta-tubulin subunit facing the microtubule plus end conferring a structural polarity. Microtubules usually have 13 protofilaments but different protofilament numbers can be found in some organisms and specialized cells. Interacts with CFAP157. It depends on Mg(2+) as a cofactor. Some glutamate residues at the C-terminus are polyglycylated, resulting in polyglycine chains on the gamma-carboxyl group. Glycylation is mainly limited to tubulin incorporated into axonemes (cilia and flagella) whereas glutamylation is prevalent in neuronal cells, centrioles, axonemes, and the mitotic spindle. Both modifications can coexist on the same protein on adjacent residues, and lowering polyglycylation levels increases polyglutamylation, and reciprocally. Cilia and flagella glycylation is required for their stability and maintenance. Flagella glycylation controls sperm motility. Post-translationally, some glutamate residues at the C-terminus are polyglutamylated, resulting in polyglutamate chains on the gamma-carboxyl group. Polyglutamylation plays a key role in microtubule severing by spastin (SPAST). SPAST preferentially recognizes and acts on microtubules decorated with short polyglutamate tails: severing activity by SPAST increases as the number of glutamates per tubulin rises from one to eight, but decreases beyond this glutamylation threshold. Glutamylation is also involved in cilia motility. In terms of processing, acetylation of alpha chains at Lys-40 is located inside the microtubule lumen. This modification has been correlated with increased microtubule stability, intracellular transport and ciliary assembly. Methylation of alpha chains at Lys-40 is found in mitotic microtubules and is required for normal mitosis and cytokinesis contributing to genomic stability. Post-translationally, although this tubulin does not encode a C-terminal tyrosine, a C-terminal tyrosine can be added post-translationally by the tubulin tyrosine ligase (TTL). It can then undergo a detyrosination cycle by the tubulin tyrosine carboxypeptidase (MATCAP1/KIAA0895L).

The protein resides in the cytoplasm. The protein localises to the cytoskeleton. It catalyses the reaction GTP + H2O = GDP + phosphate + H(+). Its function is as follows. Tubulin is the major constituent of microtubules, a cylinder consisting of laterally associated linear protofilaments composed of alpha- and beta-tubulin heterodimers. Microtubules grow by the addition of GTP-tubulin dimers to the microtubule end, where a stabilizing cap forms. Below the cap, tubulin dimers are in GDP-bound state, owing to GTPase activity of alpha-tubulin. This chain is Tubulin alpha-4A chain (TUBA4A), found in Macaca fascicularis (Crab-eating macaque).